Here is a 180-residue protein sequence, read N- to C-terminus: Beta-lactoglobulin (180 aa).

An N-terminal signal peptide occupies residues 1–18 (MKCLLLALGLALACGIQA). 3 disulfide bridges follow: cysteine 84-cysteine 178, cysteine 124-cysteine 137, and cysteine 124-cysteine 139.

This sequence belongs to the calycin superfamily. Lipocalin family. As to quaternary structure, under physiological conditions beta-lactoglobulin exists as an equilibrium mixture of monomeric and dimeric forms. Interaction with LMBR1L is controversial. Alternate disulfide bonds occur in equal amounts. In terms of tissue distribution, synthesized in mammary gland and secreted in milk.

The protein localises to the secreted. Its function is as follows. Primary component of whey, it binds retinol and is probably involved in the transport of that molecule. The polypeptide is Beta-lactoglobulin (LGB) (Capra hircus (Goat)).